The following is a 155-amino-acid chain: MIDKSGYRANVAIVLLNKQNRVFWGQRRNRTSWQFPQGGVATGETPLQAMYRELHEEIGLRPQDVEVIASTRDWYKYDIPDSLVRTKEPICIGQKQKWFLLKLKSPESYIDLDANDSPEFDNWRWVSYWYPINHVVYFKQEVYRKALTYFKEYIA.

In terms of domain architecture, Nudix hydrolase spans 6-148 (GYRANVAIVL…KQEVYRKALT (143 aa)). The Nudix box motif lies at 38–59 (GGVATGETPLQAMYRELHEEIG).

The protein belongs to the Nudix hydrolase family. RppH subfamily. It depends on a divalent metal cation as a cofactor.

Its function is as follows. Accelerates the degradation of transcripts by removing pyrophosphate from the 5'-end of triphosphorylated RNA, leading to a more labile monophosphorylated state that can stimulate subsequent ribonuclease cleavage. The sequence is that of RNA pyrophosphohydrolase from Francisella tularensis subsp. tularensis (strain FSC 198).